We begin with the raw amino-acid sequence, 695 residues long: Elongation factor G 1 (695 aa).

The 276-residue stretch at 5–280 (ARYRNIGIFA…AVVDYLPSPT (276 aa)) folds into the tr-type G domain. GTP-binding positions include 14–21 (AHVDAGKT), 78–82 (DTPGH), and 132–135 (NKLD).

It belongs to the TRAFAC class translation factor GTPase superfamily. Classic translation factor GTPase family. EF-G/EF-2 subfamily.

The protein localises to the cytoplasm. Its function is as follows. Catalyzes the GTP-dependent ribosomal translocation step during translation elongation. During this step, the ribosome changes from the pre-translocational (PRE) to the post-translocational (POST) state as the newly formed A-site-bound peptidyl-tRNA and P-site-bound deacylated tRNA move to the P and E sites, respectively. Catalyzes the coordinated movement of the two tRNA molecules, the mRNA and conformational changes in the ribosome. In Pseudoalteromonas atlantica (strain T6c / ATCC BAA-1087), this protein is Elongation factor G 1.